Here is a 339-residue protein sequence, read N- to C-terminus: Putative phosphate acyltransferase (339 aa).

It belongs to the PlsX family. Homodimer. Probably interacts with PlsY.

It localises to the cytoplasm. The enzyme catalyses a fatty acyl-[ACP] + phosphate = an acyl phosphate + holo-[ACP]. It participates in lipid metabolism; phospholipid metabolism. Functionally, catalyzes the reversible formation of acyl-phosphate (acyl-PO(4)) from acyl-[acyl-carrier-protein] (acyl-ACP). This enzyme utilizes acyl-ACP as fatty acyl donor, but not acyl-CoA. This is Putative phosphate acyltransferase from Clostridium perfringens (strain 13 / Type A).